The chain runs to 21 residues: Sarafotoxin-D (21 aa).

2 disulfide bridges follow: cysteine 1–cysteine 15 and cysteine 3–cysteine 11.

The protein belongs to the endothelin/sarafotoxin family. Expressed by the venom gland.

The protein localises to the secreted. In terms of biological role, vasoconstrictor activity. These toxins cause cardiac arrest probably as a result of coronary vasospasm. May act by displaying agonistic activities towards endothelin-1 and -2 receptors (EDNRA and EDNRB). This chain is Sarafotoxin-D, found in Atractaspis engaddensis (Israeli burrowing asp).